The primary structure comprises 423 residues: UDP-N-acetylmuramoylalanine--D-glutamate ligase (423 aa).

Residue 112–118 participates in ATP binding; the sequence is GSVGKST.

This sequence belongs to the MurCDEF family.

It localises to the cytoplasm. It carries out the reaction UDP-N-acetyl-alpha-D-muramoyl-L-alanine + D-glutamate + ATP = UDP-N-acetyl-alpha-D-muramoyl-L-alanyl-D-glutamate + ADP + phosphate + H(+). The protein operates within cell wall biogenesis; peptidoglycan biosynthesis. Cell wall formation. Catalyzes the addition of glutamate to the nucleotide precursor UDP-N-acetylmuramoyl-L-alanine (UMA). In Thermosipho africanus (strain TCF52B), this protein is UDP-N-acetylmuramoylalanine--D-glutamate ligase.